The sequence spans 804 residues: Leucine--tRNA ligase (804 aa).

The short motif at 40–51 (PYPSGAGLHVGH) is the 'HIGH' region element. Residues 574 to 578 (KMSKS) carry the 'KMSKS' region motif. Lys577 is an ATP binding site.

This sequence belongs to the class-I aminoacyl-tRNA synthetase family.

Its subcellular location is the cytoplasm. It carries out the reaction tRNA(Leu) + L-leucine + ATP = L-leucyl-tRNA(Leu) + AMP + diphosphate. The chain is Leucine--tRNA ligase from Shouchella clausii (strain KSM-K16) (Alkalihalobacillus clausii).